We begin with the raw amino-acid sequence, 853 residues long: DNA mismatch repair protein MutS (853 aa).

Residue 614 to 621 (GPNMGGKS) participates in ATP binding.

This sequence belongs to the DNA mismatch repair MutS family.

In terms of biological role, this protein is involved in the repair of mismatches in DNA. It is possible that it carries out the mismatch recognition step. This protein has a weak ATPase activity. The polypeptide is DNA mismatch repair protein MutS (Escherichia coli O81 (strain ED1a)).